We begin with the raw amino-acid sequence, 217 residues long: Aminopyrimidine aminohydrolase (217 aa).

Substrate is bound at residue Asp-44. The active-site Nucleophile is Cys-135. Substrate contacts are provided by Tyr-139 and Tyr-165. Glu-207 serves as the catalytic Proton donor.

Belongs to the TenA family. Homotetramer.

The catalysed reaction is 4-amino-5-aminomethyl-2-methylpyrimidine + H2O = 4-amino-5-hydroxymethyl-2-methylpyrimidine + NH4(+). The protein operates within cofactor biosynthesis; thiamine diphosphate biosynthesis. Functionally, catalyzes an amino-pyrimidine hydrolysis reaction at the C5' of the pyrimidine moiety of thiamine compounds to give a hydroxymethylpyrimidine (HMP). Displays low activity on 4-amino-5-aminomethyl-2-methylpyrimidine as substrate, indicating that the enzyme may act on a different HMP precursor that may derive from the human stomach food assumption or processing. Is probably involved in thiamine biosynthesis. Does not display thiaminase II activity, as it is unable to hydrolyze thiamine. The sequence is that of Aminopyrimidine aminohydrolase from Helicobacter pylori (Campylobacter pylori).